Reading from the N-terminus, the 206-residue chain is Thymidylate kinase (206 aa).

11 to 18 (GPEGAGKT) serves as a coordination point for ATP.

It belongs to the thymidylate kinase family.

It catalyses the reaction dTMP + ATP = dTDP + ADP. Functionally, phosphorylation of dTMP to form dTDP in both de novo and salvage pathways of dTTP synthesis. The protein is Thymidylate kinase (tmk) of Deinococcus radiodurans (strain ATCC 13939 / DSM 20539 / JCM 16871 / CCUG 27074 / LMG 4051 / NBRC 15346 / NCIMB 9279 / VKM B-1422 / R1).